The chain runs to 158 residues: Endoribonuclease YbeY (158 aa).

Residues His-118, His-122, and His-128 each contribute to the Zn(2+) site.

Belongs to the endoribonuclease YbeY family. Zn(2+) is required as a cofactor.

It localises to the cytoplasm. Single strand-specific metallo-endoribonuclease involved in late-stage 70S ribosome quality control and in maturation of the 3' terminus of the 16S rRNA. This chain is Endoribonuclease YbeY, found in Haemophilus ducreyi (strain 35000HP / ATCC 700724).